A 943-amino-acid polypeptide reads, in one-letter code: Lysine-specific demethylase JMJ21 (943 aa).

The 47-residue stretch at leucine 14 to leucine 60 folds into the F-box domain. A JmjC domain is found at glutamate 216 to tyrosine 379. Fe cation is bound by residues histidine 262, aspartate 264, and histidine 347. Over residues asparagine 396 to asparagine 410 the composition is skewed to acidic residues. The disordered stretch occupies residues asparagine 396 to aspartate 438.

The protein belongs to the JARID1 histone demethylase family. Fe(2+) is required as a cofactor. As to expression, mostly expressed in leaves, and, to a lower extent, in inflorescences, roots, siliques and stems.

It localises to the nucleus. Functionally, may function as histone H3 lysine demethylase and be involved in regulation of gene expression. The chain is Lysine-specific demethylase JMJ21 from Arabidopsis thaliana (Mouse-ear cress).